Consider the following 332-residue polypeptide: DNA-directed RNA polymerase 2A (332 aa).

Residues D33, K108, and D265 contribute to the active site.

Belongs to the phage and mitochondrial RNA polymerase family.

The catalysed reaction is RNA(n) + a ribonucleoside 5'-triphosphate = RNA(n+1) + diphosphate. Its function is as follows. DNA-dependent RNA polymerase catalyzes the transcription of DNA into RNA using the four ribonucleoside triphosphates as substrates. The polypeptide is DNA-directed RNA polymerase 2A (RPOT2-SYL) (Nicotiana tabacum (Common tobacco)).